The sequence spans 339 residues: MNNDKNGSSGGLALIGDIGGTNARFALWRGQRLESIAVLACADYPRPELAVRDYLARVGESLANIDSVCLACAGPVGAGDFRFTNNHWSINRAAFREELGLDHLLLVNDFSTMAWAASRLGADELVQVRPGSAQADRARLIIGPGTGLGVGSLLPLGEGRWEVLPCEGGHVDLPVTSARDFAVWESLRERYGHVSAERVLSGNGLLALYEISCALDGIPVRATSAAEVGALALAGDAQADAVLEHFFLWLARVAGNAALTVGALGGVYITGGIVPRFRERFLASGFAGAFASRGKTSGAYLQDVPVWIMTAEHPGLLGAGVALQQALDAESRTGVRATA.

16–21 contacts ATP; sequence GDIGGT.

The protein belongs to the bacterial glucokinase family.

Its subcellular location is the cytoplasm. It catalyses the reaction D-glucose + ATP = D-glucose 6-phosphate + ADP + H(+). This Pseudomonas paraeruginosa (strain DSM 24068 / PA7) (Pseudomonas aeruginosa (strain PA7)) protein is Glucokinase.